The primary structure comprises 122 residues: Large ribosomal subunit protein uL14 (122 aa).

It belongs to the universal ribosomal protein uL14 family. In terms of assembly, part of the 50S ribosomal subunit. Forms a cluster with proteins L3 and L19. In the 70S ribosome, L14 and L19 interact and together make contacts with the 16S rRNA in bridges B5 and B8.

Functionally, binds to 23S rRNA. Forms part of two intersubunit bridges in the 70S ribosome. This Orientia tsutsugamushi (strain Boryong) (Rickettsia tsutsugamushi) protein is Large ribosomal subunit protein uL14.